The following is a 173-amino-acid chain: Adenine phosphoribosyltransferase (173 aa).

The protein belongs to the purine/pyrimidine phosphoribosyltransferase family. Homodimer.

It is found in the cytoplasm. The enzyme catalyses AMP + diphosphate = 5-phospho-alpha-D-ribose 1-diphosphate + adenine. Its pathway is purine metabolism; AMP biosynthesis via salvage pathway; AMP from adenine: step 1/1. Its function is as follows. Catalyzes a salvage reaction resulting in the formation of AMP, that is energically less costly than de novo synthesis. This Ureaplasma parvum serovar 3 (strain ATCC 27815 / 27 / NCTC 11736) protein is Adenine phosphoribosyltransferase.